Reading from the N-terminus, the 569-residue chain is MDFFSEYGDSSRYKIQEIVGKGSYGVVCSAIDQHTGDKVAIKKIHNIFEHLSDAARILREIKLLRLLRHPDIVEIKHIMLPPSRRDFKDIYVVFELMDTDLHQVIKANDDLTKEHHQFFLYQMLRALKYIHTANVYHRDLKPKNILANANCKLKICDFGLARVAFNDTPTTVFWTDYVATRWYRAPELCGSFFSKYSPAIDTWSIGCIFAEILTGKPLFPGKNVVHQLDLMTDLLGTPSMDAISRIRNDKARRYLSSMRRKQPVPFSEKFPNVDPLALKLLQRLLAFDPKDRPTAEEALADPYFKGLAKVEREPSCQPISKMEFEFERRKVTKDDIKELIFREILEYHPQLLKDYMNGSENTSFLYPSAVDNFRRQFAILEENGGKSGALDRKHVSLPRATTVHSTSIPPNEGLDATSQVTQRIPTARPGRTVGPVLPFENPGAADPHSARRVVRNPMVPPAAANKSGYSYNLKSDYSDRQHQEELEKDRVQYRPAQHLMDAKVAPDTAPDIRSSQYYFTRSAPRTDLTDRAALQGSMLYGIAPFNGIAAVAGGYSKVGAVQYGVSRMY.

Residues 13–304 form the Protein kinase domain; it reads YKIQEIVGKG…AEEALADPYF (292 aa). Residues 19 to 27 and Lys42 each bind ATP; that span reads VGKGSYGVV. Asp139 (proton acceptor) is an active-site residue. At Thr175 the chain carries Phosphothreonine. Positions 175-177 match the TXY motif; the sequence is TDY. Tyr177 carries the post-translational modification Phosphotyrosine. A disordered region spans residues 401–420; the sequence is TTVHSTSIPPNEGLDATSQV.

Belongs to the protein kinase superfamily. CMGC Ser/Thr protein kinase family. MAP kinase subfamily. Post-translationally, dually phosphorylated on Thr-175 and Tyr-177, which activates the enzyme.

It carries out the reaction L-seryl-[protein] + ATP = O-phospho-L-seryl-[protein] + ADP + H(+). The catalysed reaction is L-threonyl-[protein] + ATP = O-phospho-L-threonyl-[protein] + ADP + H(+). Activated by threonine and tyrosine phosphorylation. This is Mitogen-activated protein kinase 7 (MPK7) from Oryza sativa subsp. japonica (Rice).